A 20-amino-acid polypeptide reads, in one-letter code: 21 kDa cold shock-induced protein (20 aa).

Residues 1–12 (TDSIKETIKETV) are compositionally biased toward basic and acidic residues. The segment at 1-20 (TDSIKETIKETVNHQAEWPY) is disordered.

In Streptococcus thermophilus, this protein is 21 kDa cold shock-induced protein.